Here is a 291-residue protein sequence, read N- to C-terminus: ATP synthase gamma chain (291 aa).

It belongs to the ATPase gamma chain family. In terms of assembly, F-type ATPases have 2 components, CF(1) - the catalytic core - and CF(0) - the membrane proton channel. CF(1) has five subunits: alpha(3), beta(3), gamma(1), delta(1), epsilon(1). CF(0) has three main subunits: a, b and c.

The protein resides in the cell membrane. Functionally, produces ATP from ADP in the presence of a proton gradient across the membrane. The gamma chain is believed to be important in regulating ATPase activity and the flow of protons through the CF(0) complex. In Streptococcus equinus (Streptococcus bovis), this protein is ATP synthase gamma chain.